The chain runs to 266 residues: Pre-mRNA-splicing factor PRP11 (266 aa).

Positions 1–21 (MNYLEGVGSKKGGGGIASESQ) are disordered. Residues 66 to 96 (LVCKLCNTMHMSWSSVERHLGGKKHGLNVLR) form a Matrin-type zinc finger.

It belongs to the SF3A2 family. In terms of assembly, belongs to the CWC complex (or CEF1-associated complex), a spliceosome sub-complex reminiscent of a late-stage spliceosome composed of the U2, U5 and U6 snRNAs and at least BUD13, BUD31, BRR2, CDC40, CEF1, CLF1, CUS1, CWC2, CWC15, CWC21, CWC22, CWC23, CWC24, CWC25, CWC27, ECM2, HSH155, IST3, ISY1, LEA1, MSL1, NTC20, PRP8, PRP9, PRP11, PRP19, PRP21, PRP22, PRP45, PRP46, SLU7, SMB1, SMD1, SMD2, SMD3, SMX2, SMX3, SNT309, SNU114, SPP2, SYF1, SYF2, RSE1 and YJU2. Interacts with CUS2.

Its subcellular location is the nucleus. In terms of biological role, mRNA splicing factors, PRP9, PRP11, and PRP21, are necessary for addition of the U2 snRNP to the pre-mRNA in an early step of spliceosome assembly. The chain is Pre-mRNA-splicing factor PRP11 (PRP11) from Saccharomyces cerevisiae (strain ATCC 204508 / S288c) (Baker's yeast).